The sequence spans 60 residues: Cytotoxin 1 (60 aa).

4 disulfides stabilise this stretch: Cys3–Cys21, Cys14–Cys38, Cys42–Cys53, and Cys54–Cys59.

This sequence belongs to the three-finger toxin family. Short-chain subfamily. Type IA cytotoxin sub-subfamily. Monomer in solution; Homodimer and oligomer in the presence of negatively charged lipids forming a pore with a size ranging between 20 and 30 angstroms. As to expression, expressed by the venom gland.

It localises to the secreted. It is found in the target cell membrane. Functionally, basic protein that binds to cell membrane and depolarizes cardiomyocytes. This cytotoxin also possesses lytic activity on many other cells, including red blood cells. Interaction with sulfatides in the cell membrane induces pore formation and cell internalization and is responsible for cytotoxicity in cardiomyocytes. It targets the mitochondrial membrane and induces mitochondrial swelling and fragmentation. Inhibits protein kinases C. It binds to the integrin alpha-V/beta-3 with a moderate affinity. This chain is Cytotoxin 1, found in Naja pallida (Red spitting cobra).